A 106-amino-acid polypeptide reads, in one-letter code: Large ribosomal subunit protein bL21 (106 aa).

Belongs to the bacterial ribosomal protein bL21 family. In terms of assembly, part of the 50S ribosomal subunit. Contacts protein L20.

Its function is as follows. This protein binds to 23S rRNA in the presence of protein L20. The protein is Large ribosomal subunit protein bL21 of Thermosipho africanus (strain TCF52B).